The primary structure comprises 445 residues: Sensor protein kinase CarS (445 aa).

A signal peptide spans 1–24; it reads MRSIQRRLSVGLFAVLLVVGLVLA. Residues 150–170 traverse the membrane as a helical segment; it reads FARVQWMGLGAGALALLLVLL. One can recognise an HAMP domain in the interval 177 to 228; the sequence is RRSLRPLEEVRLQIAQLQQGQRSQLDNQAPEELEPLVEQINHLLAHTEETLK. The region spanning 236–438 is the Histidine kinase domain; the sequence is NLGHALKTPL…RVSVELPLQK (203 aa). At H239 the chain carries Phosphohistidine; by autocatalysis.

It localises to the membrane. It carries out the reaction ATP + protein L-histidine = ADP + protein N-phospho-L-histidine.. Functionally, member of the two-component regulatory system CarS/CarR that regulates the expression of multiple genes involved in calcium signaling and homeostasis including CarO and CarP. May function as a membrane-associated protein kinase that phosphorylates CarR in response to environmental signals leading to activation of specific gene promoters. In Pseudomonas aeruginosa (strain ATCC 15692 / DSM 22644 / CIP 104116 / JCM 14847 / LMG 12228 / 1C / PRS 101 / PAO1), this protein is Sensor protein kinase CarS (carS).